A 247-amino-acid polypeptide reads, in one-letter code: Probable chemoreceptor glutamine deamidase CheD (247 aa).

A disordered region spans residues Lys-204–Ala-247.

The protein belongs to the CheD family.

The enzyme catalyses L-glutaminyl-[protein] + H2O = L-glutamyl-[protein] + NH4(+). Its function is as follows. Probably deamidates glutamine residues to glutamate on methyl-accepting chemotaxis receptors (MCPs), playing an important role in chemotaxis. The polypeptide is Probable chemoreceptor glutamine deamidase CheD (Burkholderia orbicola (strain MC0-3)).